Here is a 322-residue protein sequence, read N- to C-terminus: Phosphatidylserine decarboxylase proenzyme (322 aa).

Residues aspartate 90, histidine 147, and serine 254 each act as charge relay system; for autoendoproteolytic cleavage activity in the active site. Catalysis depends on serine 254, which acts as the Schiff-base intermediate with substrate; via pyruvic acid; for decarboxylase activity. Serine 254 carries the post-translational modification Pyruvic acid (Ser); by autocatalysis. The disordered stretch occupies residues 294-322; that stretch reads EVEPAPLPADEIKAEHDASPLVDNKKDDT. The segment covering 303-322 has biased composition (basic and acidic residues); the sequence is DEIKAEHDASPLVDNKKDDT.

The protein belongs to the phosphatidylserine decarboxylase family. PSD-B subfamily. Prokaryotic type I sub-subfamily. In terms of assembly, heterodimer of a large membrane-associated beta subunit and a small pyruvoyl-containing alpha subunit. It depends on pyruvate as a cofactor. In terms of processing, is synthesized initially as an inactive proenzyme. Formation of the active enzyme involves a self-maturation process in which the active site pyruvoyl group is generated from an internal serine residue via an autocatalytic post-translational modification. Two non-identical subunits are generated from the proenzyme in this reaction, and the pyruvate is formed at the N-terminus of the alpha chain, which is derived from the carboxyl end of the proenzyme. The autoendoproteolytic cleavage occurs by a canonical serine protease mechanism, in which the side chain hydroxyl group of the serine supplies its oxygen atom to form the C-terminus of the beta chain, while the remainder of the serine residue undergoes an oxidative deamination to produce ammonia and the pyruvoyl prosthetic group on the alpha chain. During this reaction, the Ser that is part of the protease active site of the proenzyme becomes the pyruvoyl prosthetic group, which constitutes an essential element of the active site of the mature decarboxylase.

It localises to the cell membrane. It catalyses the reaction a 1,2-diacyl-sn-glycero-3-phospho-L-serine + H(+) = a 1,2-diacyl-sn-glycero-3-phosphoethanolamine + CO2. It functions in the pathway phospholipid metabolism; phosphatidylethanolamine biosynthesis; phosphatidylethanolamine from CDP-diacylglycerol: step 2/2. Catalyzes the formation of phosphatidylethanolamine (PtdEtn) from phosphatidylserine (PtdSer). This chain is Phosphatidylserine decarboxylase proenzyme, found in Salmonella paratyphi C (strain RKS4594).